A 216-amino-acid polypeptide reads, in one-letter code: Thioredoxin-like 2, chloroplastic (216 aa).

A chloroplast-targeting transit peptide spans 1-58 (MAEALLPLPRRLVVTASTPACSSASSSTSPSPHCLLSRANPRPPRLAAPSPPRHRRLK). The segment covering 19–40 (PACSSASSSTSPSPHCLLSRAN) has biased composition (low complexity). A disordered region spans residues 19–70 (PACSSASSSTSPSPHCLLSRANPRPPRLAAPSPPRHRRLKAHAAVSDKSEQP). Residues 41 to 51 (PRPPRLAAPSP) are compositionally biased toward pro residues. Residues 61-188 (AAVSDKSEQP…LKDAIAVHNT (128 aa)) enclose the Thioredoxin domain. Catalysis depends on nucleophile residues C111 and C114. Residues C111 and C114 are joined by a disulfide bond.

It belongs to the thioredoxin family.

Its subcellular location is the plastid. The protein resides in the chloroplast. Its function is as follows. Probable thiol-disulfide oxidoreductase that may participate in various redox reactions. The protein is Thioredoxin-like 2, chloroplastic of Oryza sativa subsp. japonica (Rice).